Reading from the N-terminus, the 917-residue chain is DNA mismatch repair protein spellchecker 1 (917 aa).

667-674 (GPNMGGKS) is a binding site for ATP.

This sequence belongs to the DNA mismatch repair MutS family. Heterodimer of Msh2/Spel and Msh6.

It is found in the nucleus. In terms of biological role, involved in postreplication mismatch repair. Binds specifically to DNA containing mismatched nucleotides thus providing a target for the excision repair processes characteristic of postreplication mismatch repair. This chain is DNA mismatch repair protein spellchecker 1 (spel1), found in Drosophila melanogaster (Fruit fly).